The primary structure comprises 592 residues: MVLLDSLVGTIVGINGPVIKAEGMSKFKMREMVMVGKKKLIGEIIILENDLATIQVYEETSGLKIGENISSTGMPLSLKLGPGIIGNMFDGIQRPLKKINEISYGFIDEGIGLISIDEEKEWDVNIVVKVGDKLKPGDVYAEVQETNIIKHRIMVPQDVNGEVTKVKESGKYNIEEKIVTVKDGGNIYELNLYQRWPVRTPRPIKNRLSLGKPLITGQRILDMFFPIAKGGTVAIPGGFGTGKTMTQHQLAKWSDADIIVYIGCGERGNEMTEVLEDFPKLIDPKTNTSLMNRTVLIANTSNMPVAAREASIYTGITIAEYYRDMGYDVAIMADSTSRWAEALREISGRLEEMPAEEGYPAYLPSRIAEFYERAGYVENLNDTEGSVTVIGAVSPAGADFSEPVTQNTKRFVGAFLGLDRKLAYARHYPAINWLTSYSQYNVMLTDWYLENISEDIIELRNKMLKILFEENKLQEIVKLVGEDVLPDDQRLILEVARILKVGFLQQNAYHDEDTYVPKEKQYKMLKAIELFYDNAYKCVKMGIPISKIRNEEIFGDLIKMKYNIPNEDISGIKVIEEKISSYYEELIEQYRK.

An ATP-binding site is contributed by 237-244; sequence GGFGTGKT.

Belongs to the ATPase alpha/beta chains family.

The catalysed reaction is ATP + H2O + 4 H(+)(in) = ADP + phosphate + 5 H(+)(out). Produces ATP from ADP in the presence of a proton gradient across the membrane. The V-type alpha chain is a catalytic subunit. The sequence is that of V-type ATP synthase alpha chain 2 from Clostridium tetani (strain Massachusetts / E88).